The primary structure comprises 311 residues: tRNA dimethylallyltransferase (311 aa).

Residue 12–19 (GPTASGKT) coordinates ATP. 14-19 (TASGKT) is a substrate binding site. Interaction with substrate tRNA stretches follow at residues 37 to 40 (DSAM) and 161 to 165 (QRIQR).

Belongs to the IPP transferase family. In terms of assembly, monomer. It depends on Mg(2+) as a cofactor.

The catalysed reaction is adenosine(37) in tRNA + dimethylallyl diphosphate = N(6)-dimethylallyladenosine(37) in tRNA + diphosphate. Its function is as follows. Catalyzes the transfer of a dimethylallyl group onto the adenine at position 37 in tRNAs that read codons beginning with uridine, leading to the formation of N6-(dimethylallyl)adenosine (i(6)A). The protein is tRNA dimethylallyltransferase of Coxiella burnetii (strain Dugway 5J108-111).